A 362-amino-acid polypeptide reads, in one-letter code: Spermidine/putrescine import ATP-binding protein PotA (362 aa).

One can recognise an ABC transporter domain in the interval 6-237 (ISFKHVVKSY…PINHYVADFI (232 aa)). Position 39–46 (39–46 (GPSGCGKT)) interacts with ATP.

This sequence belongs to the ABC transporter superfamily. Spermidine/putrescine importer (TC 3.A.1.11.1) family. As to quaternary structure, the complex is composed of two ATP-binding proteins (PotA), two transmembrane proteins (PotB and PotC) and a solute-binding protein (PotD).

It is found in the cell membrane. The catalysed reaction is ATP + H2O + polyamine-[polyamine-binding protein]Side 1 = ADP + phosphate + polyamineSide 2 + [polyamine-binding protein]Side 1.. In terms of biological role, part of the ABC transporter complex PotABCD involved in spermidine/putrescine import. Responsible for energy coupling to the transport system. The sequence is that of Spermidine/putrescine import ATP-binding protein PotA from Ligilactobacillus salivarius (strain UCC118) (Lactobacillus salivarius).